Reading from the N-terminus, the 145-residue chain is Transcription antitermination protein NusB (145 aa).

It belongs to the NusB family.

In terms of biological role, involved in transcription antitermination. Required for transcription of ribosomal RNA (rRNA) genes. Binds specifically to the boxA antiterminator sequence of the ribosomal RNA (rrn) operons. This chain is Transcription antitermination protein NusB, found in Paraburkholderia phymatum (strain DSM 17167 / CIP 108236 / LMG 21445 / STM815) (Burkholderia phymatum).